The sequence spans 271 residues: Regulatory protein RecX (271 aa).

This sequence belongs to the RecX family.

It localises to the cytoplasm. Its function is as follows. Modulates RecA activity. The polypeptide is Regulatory protein RecX (Lactobacillus delbrueckii subsp. bulgaricus (strain ATCC 11842 / DSM 20081 / BCRC 10696 / JCM 1002 / NBRC 13953 / NCIMB 11778 / NCTC 12712 / WDCM 00102 / Lb 14)).